Reading from the N-terminus, the 627-residue chain is 1-deoxy-D-xylulose-5-phosphate synthase (627 aa).

Thiamine diphosphate is bound by residues His75 and 116–118 (AHS). Position 147 (Asp147) interacts with Mg(2+). Thiamine diphosphate contacts are provided by residues 148 to 149 (GA), Asn177, Tyr284, and Glu366. Asn177 provides a ligand contact to Mg(2+).

This sequence belongs to the transketolase family. DXPS subfamily. In terms of assembly, homodimer. Mg(2+) serves as cofactor. The cofactor is thiamine diphosphate.

The enzyme catalyses D-glyceraldehyde 3-phosphate + pyruvate + H(+) = 1-deoxy-D-xylulose 5-phosphate + CO2. The protein operates within metabolic intermediate biosynthesis; 1-deoxy-D-xylulose 5-phosphate biosynthesis; 1-deoxy-D-xylulose 5-phosphate from D-glyceraldehyde 3-phosphate and pyruvate: step 1/1. Functionally, catalyzes the acyloin condensation reaction between C atoms 2 and 3 of pyruvate and glyceraldehyde 3-phosphate to yield 1-deoxy-D-xylulose-5-phosphate (DXP). The chain is 1-deoxy-D-xylulose-5-phosphate synthase from Bordetella petrii (strain ATCC BAA-461 / DSM 12804 / CCUG 43448).